Reading from the N-terminus, the 91-residue chain is Small ribosomal subunit protein uS19 (91 aa).

This sequence belongs to the universal ribosomal protein uS19 family.

Functionally, protein S19 forms a complex with S13 that binds strongly to the 16S ribosomal RNA. The polypeptide is Small ribosomal subunit protein uS19 (Erythrobacter litoralis (strain HTCC2594)).